A 292-amino-acid chain; its full sequence is Cyclin-dependent kinase 5 (292 aa).

Residues 4 to 286 (YEKLEKIGEG…AEEALQHPYF (283 aa)) enclose the Protein kinase domain. ATP-binding positions include 10-18 (IGEGTYGTV) and Lys-33. Tyr-15 is modified (phosphotyrosine; by ABL1, EPHA4 and FYN). Thr-17 carries the phosphothreonine modification. An N6-acetyllysine modification is found at Lys-56. Ser-72 bears the Phosphoserine mark. Asp-126 serves as the catalytic Proton acceptor. Ser-159 carries the phosphoserine modification.

This sequence belongs to the protein kinase superfamily. CMGC Ser/Thr protein kinase family. CDC2/CDKX subfamily. As to quaternary structure, heterodimer composed of a catalytic subunit CDK5 and a regulatory subunit CDK5R1 (p25) and macromolecular complex composed of at least CDK5, CDK5R1 (p35) and CDK5RAP1 or CDK5RAP2 or CDK5RAP3. Only the heterodimer shows kinase activity. Under neurotoxic stress and neuronal injury conditions, p35 is cleaved by calpain to generate p25 that hyperactivates CDK5, that becomes functionally disabled and often toxic. Found in a trimolecular complex with CABLES1 and ABL1. Interacts with CABLES1 and CABLES2. Interacts with AATK and GSTP1. Binds to HDAC1 when in complex with p25. Interaction with myristoylation p35 promotes CDK5 association with membranes. Both isoforms 1 and 2 interacts with beta-catenin/CTNNB1. Interacts with delta-catenin/CTNND2 and APEX1. Interacts with P53/TP53 in neurons. Interacts with PTK2/FAK1. Interacts with EPHA4; may mediate the activation of NGEF by EPHA4. The complex p35/CDK5 interacts with CLOCK. Interacts with HTR6. In terms of processing, phosphorylation on Tyr-15 by ABL1 and FYN, and on Ser-159 by casein kinase 1 promotes kinase activity. By contrast, phosphorylation at Thr-14 inhibits activity. Post-translationally, phosphorylation at Ser-159 is essential for maximal catalytic activity. Expressed in hippocampal neuronal synaptic termini (at protein level). Expressed predominantly in post-mitotic neurons of the central and peripheral nervous system.

The protein resides in the cytoplasm. It localises to the nucleus. The protein localises to the cell membrane. Its subcellular location is the perikaryon. It is found in the cell projection. The protein resides in the lamellipodium. It localises to the growth cone. The protein localises to the postsynaptic density. Its subcellular location is the synapse. The enzyme catalyses L-seryl-[protein] + ATP = O-phospho-L-seryl-[protein] + ADP + H(+). It catalyses the reaction L-threonyl-[protein] + ATP = O-phospho-L-threonyl-[protein] + ADP + H(+). Its activity is regulated as follows. Inhibited by 2-(1-ethyl-2-hydroxyethylamino)-6-benzylamino-9-isopropylpurine (roscovitine), 1-isopropyl-4-aminobenzyl-6-ether-linked benzimidazoles, resveratrol, AT-7519 and olomoucine. Activated by CDK5R1 (p35) and CDK5R2 (p39) during the development of the nervous system; degradation of CDK5R1 (p35) and CDK5R2 (p39) by proteasome result in down regulation of kinase activity, during this process, CDK5 phosphorylates p35 and induces its ubiquitination and subsequent degradation. Kinase activity is mainly determined by the amount of p35 available and subcellular location; reversible association to plasma membrane inhibits activity. Long-term inactivation as well as CDK5R1 (p25)-mediated hyperactivation of CDK5 triggers cell death. The pro-death activity of hyperactivated CDK5 is suppressed by membrane association of CDK5, via myristoylation of p35. Brain-derived neurotrophic factor, glial-derived neurotrophic factor, nerve growth factor (NGF), retinoic acid, laminin and neuregulin promote activity. Neurotoxicity enhances nuclear activity, thus leading to MEF2 phosphorylation and inhibition prior to apoptosis of cortical neurons. Repression by GSTP1 via p25/p35 translocation prevents neurodegeneration. Proline-directed serine/threonine-protein kinase essential for neuronal cell cycle arrest and differentiation and may be involved in apoptotic cell death in neuronal diseases by triggering abortive cell cycle re-entry. Interacts with D1 and D3-type G1 cyclins. Phosphorylates SRC, NOS3, VIM/vimentin, p35/CDK5R1, MEF2A, SIPA1L1, SH3GLB1, PXN, PAK1, MCAM/MUC18, SEPT5, SYN1, DNM1, AMPH, SYNJ1, CDK16, RAC1, RHOA, CDC42, TONEBP/NFAT5, MAPT/TAU, MAP1B, histone H1, p53/TP53, HDAC1, APEX1, PTK2/FAK1, huntingtin/HTT, ATM, MAP2, NEFH and NEFM. Regulates several neuronal development and physiological processes including neuronal survival, migration and differentiation, axonal and neurite growth, synaptogenesis, oligodendrocyte differentiation, synaptic plasticity and neurotransmission, by phosphorylating key proteins. Negatively regulates the CACNA1B/CAV2.2 -mediated Ca(2+) release probability at hippocampal neuronal soma and synaptic terminals. Activated by interaction with CDK5R1 (p35) and CDK5R2 (p39), especially in postmitotic neurons, and promotes CDK5R1 (p35) expression in an autostimulation loop. Phosphorylates many downstream substrates such as Rho and Ras family small GTPases (e.g. PAK1, RAC1, RHOA, CDC42) or microtubule-binding proteins (e.g. MAPT/TAU, MAP2, MAP1B), and modulates actin dynamics to regulate neurite growth and/or spine morphogenesis. Also phosphorylates exocytosis associated proteins such as MCAM/MUC18, SEPT5, SYN1, and CDK16/PCTAIRE1 as well as endocytosis associated proteins such as DNM1, AMPH and SYNJ1 at synaptic terminals. In the mature central nervous system (CNS), regulates neurotransmitter movements by phosphorylating substrates associated with neurotransmitter release and synapse plasticity; synaptic vesicle exocytosis, vesicles fusion with the presynaptic membrane, and endocytosis. Promotes cell survival by activating anti-apoptotic proteins BCL2 and STAT3, and negatively regulating of JNK3/MAPK10 activity. Phosphorylation of p53/TP53 in response to genotoxic and oxidative stresses enhances its stabilization by preventing ubiquitin ligase-mediated proteasomal degradation, and induces transactivation of p53/TP53 target genes, thus regulating apoptosis. Phosphorylation of p35/CDK5R1 enhances its stabilization by preventing calpain-mediated proteolysis producing p25/CDK5R1 and avoiding ubiquitin ligase-mediated proteasomal degradation. During aberrant cell-cycle activity and DNA damage, p25/CDK5 activity elicits cell-cycle activity and double-strand DNA breaks that precedes neuronal death by deregulating HDAC1. DNA damage triggered phosphorylation of huntingtin/HTT in nuclei of neurons protects neurons against polyglutamine expansion as well as DNA damage mediated toxicity. Phosphorylation of PXN reduces its interaction with PTK2/FAK1 in matrix-cell focal adhesions (MCFA) during oligodendrocytes (OLs) differentiation. Negative regulator of Wnt/beta-catenin signaling pathway. Activator of the GAIT (IFN-gamma-activated inhibitor of translation) pathway, which suppresses expression of a post-transcriptional regulon of proinflammatory genes in myeloid cells; phosphorylates the linker domain of glutamyl-prolyl tRNA synthetase (EPRS) in a IFN-gamma-dependent manner, the initial event in assembly of the GAIT complex. Phosphorylation of SH3GLB1 is required for autophagy induction in starved neurons. Phosphorylation of TONEBP/NFAT5 in response to osmotic stress mediates its rapid nuclear localization. MEF2 is inactivated by phosphorylation in nucleus in response to neurotoxin, thus leading to neuronal apoptosis. APEX1 AP-endodeoxyribonuclease is repressed by phosphorylation, resulting in accumulation of DNA damage and contributing to neuronal death. NOS3 phosphorylation down regulates NOS3-derived nitrite (NO) levels. SRC phosphorylation mediates its ubiquitin-dependent degradation and thus leads to cytoskeletal reorganization. May regulate endothelial cell migration and angiogenesis via the modulation of lamellipodia formation. Involved in dendritic spine morphogenesis by mediating the EFNA1-EPHA4 signaling. The complex p35/CDK5 participates in the regulation of the circadian clock by modulating the function of CLOCK protein: phosphorylates CLOCK at 'Thr-451' and 'Thr-461' and regulates the transcriptional activity of the CLOCK-BMAL1 heterodimer in association with altered stability and subcellular distribution. In Rattus norvegicus (Rat), this protein is Cyclin-dependent kinase 5.